The following is a 493-amino-acid chain: MRGFGPGLTARRLLPLRLPPRPPGPRLASGQAAGALERAMDELLRRAVPPTPAYELREKTPAPAEGQCADFVSFYGGLAETAQRAELLGRLARGFGVDHGQVAEQSAGVLHLRQQQREAAVLLQAEDRLRYALVPRYRGLFHHISKLDGGVRFLVQLRADLLEAQALKLVEGPDVREMNGVLKGMLSEWFSSGFLNLERVTWHSPCEVLQKISEAEAVHPVKNWMDMKRRVGPYRRCYFFSHCSTPGEPLVVLHVALTGDISSNIQAIVKEHPPSETEEKNKITAAIFYSISLTQQGLQGVELGTFLIKRVVKELQREFPHLGVFSSLSPIPGFTKWLLGLLNSQTKEHGRNELFTDSECKEISEITGGPINETLKLLLSSSEWVQSEKLVRALQTPLMRLCAWYLYGEKHRGYALNPVANFHLQNGAVLWRINWMADVSLRGITGSCGLMANYRYFLEETGPNSTSYLGSKIIKASEQVLSLVAQFQKNSKL.

Residues 1–39 (MRGFGPGLTARRLLPLRLPPRPPGPRLASGQAAGALERA) constitute a mitochondrion transit peptide. Residues 40–190 (MDELLRRAVP…VLKGMLSEWF (151 aa)) are alpha-helical domain. Position 59 is an N6-acetyllysine (lysine 59). At lysine 168 the chain carries N6-acetyllysine; alternate. The residue at position 168 (lysine 168) is an N6-succinyllysine; alternate. Residues 191-493 (SSGFLNLERV…VAQFQKNSKL (303 aa)) are catalytic domain. Lysine 211 carries the N6-acetyllysine modification. Lysine 222 carries the N6-succinyllysine modification. Residues 299-305 (QGVELGT) and serine 329 each bind malonyl-CoA. Residue serine 329 is the Proton acceptor of the active site. An N6-acetyllysine modification is found at lysine 389. Histidine 423 contacts malonyl-CoA. The active-site Proton donor is histidine 423. Lysine 472 carries the post-translational modification N6-acetyllysine. The Microbody targeting signal signature appears at 491-493 (SKL).

Homotetramer. Dimer of dimers. The two subunits within a dimer display conformational differences suggesting that at any given moment, only one of the two subunits is competent for malonyl-CoA binding and catalytic activity. Under oxidizing conditions, can form disulfide-linked homotetramers (in vitro). Associates with the peroxisomal targeting signal receptor PEX5. In terms of processing, acetylation at Lys-472 activates malonyl-CoA decarboxylase activity. Deacetylation at Lys-472 by SIRT4 represses activity, leading to promote lipogenesis. Interchain disulfide bonds may form in peroxisomes (Potential). Interchain disulfide bonds are not expected to form in the reducing environment of the cytoplasm and mitochondria. In terms of tissue distribution, expressed in fibroblasts and hepatoblastoma cells (at protein level). Expressed strongly in heart, liver, skeletal muscle, kidney and pancreas. Expressed in myotubes. Expressed weakly in brain, placenta, spleen, thymus, testis, ovary and small intestine.

It localises to the cytoplasm. It is found in the mitochondrion matrix. The protein localises to the peroxisome. The protein resides in the peroxisome matrix. It carries out the reaction malonyl-CoA + H(+) = acetyl-CoA + CO2. It participates in metabolic intermediate biosynthesis; acetyl-CoA biosynthesis; acetyl-CoA from malonyl-CoA: step 1/1. Malonyl-CoA decarboxylase activity does not require any cofactors or divalent metal ions. Formation of interchain disulfide bonds leads to positive cooperativity between active sites and increases the affinity for malonyl-CoA and the catalytic efficiency (in vitro). Its function is as follows. Catalyzes the conversion of malonyl-CoA to acetyl-CoA. In the fatty acid biosynthesis MCD selectively removes malonyl-CoA and thus assures that methyl-malonyl-CoA is the only chain elongating substrate for fatty acid synthase and that fatty acids with multiple methyl side chains are produced. In peroxisomes it may be involved in degrading intraperoxisomal malonyl-CoA, which is generated by the peroxisomal beta-oxidation of odd chain-length dicarboxylic fatty acids. Plays a role in the metabolic balance between glucose and lipid oxidation in muscle independent of alterations in insulin signaling. May play a role in controlling the extent of ischemic injury by promoting glucose oxidation. The sequence is that of Malonyl-CoA decarboxylase, mitochondrial from Homo sapiens (Human).